The following is a 557-amino-acid chain: Aerobic glycerol-3-phosphate dehydrogenase (557 aa).

21 to 49 is an FAD binding site; that stretch reads DVVIIGGGITGAGIALDASQRGMKVALVE.

It belongs to the FAD-dependent glycerol-3-phosphate dehydrogenase family. It depends on FAD as a cofactor.

The protein localises to the cytoplasm. It carries out the reaction a quinone + sn-glycerol 3-phosphate = dihydroxyacetone phosphate + a quinol. It functions in the pathway polyol metabolism; glycerol degradation via glycerol kinase pathway; glycerone phosphate from sn-glycerol 3-phosphate (aerobic route): step 1/1. The protein is Aerobic glycerol-3-phosphate dehydrogenase (glpD) of Staphylococcus haemolyticus (strain JCSC1435).